The following is a 240-amino-acid chain: Uridylate kinase (240 aa).

Residue 13–16 (KLSG) participates in ATP binding. The tract at residues 21–26 (GEQGYG) is involved in allosteric activation by GTP. Glycine 55 is a UMP binding site. ATP contacts are provided by glycine 56 and arginine 60. Residues aspartate 75 and 137–144 (TGNPFFST) contribute to the UMP site. Residues threonine 164, tyrosine 170, and aspartate 173 each contribute to the ATP site.

The protein belongs to the UMP kinase family. In terms of assembly, homohexamer.

The protein localises to the cytoplasm. It carries out the reaction UMP + ATP = UDP + ADP. The protein operates within pyrimidine metabolism; CTP biosynthesis via de novo pathway; UDP from UMP (UMPK route): step 1/1. With respect to regulation, allosterically activated by GTP. Inhibited by UTP. Catalyzes the reversible phosphorylation of UMP to UDP. The chain is Uridylate kinase from Aquifex aeolicus (strain VF5).